We begin with the raw amino-acid sequence, 425 residues long: Protein CLP1 homolog (425 aa).

ATP is bound by residues glutamate 18, lysine 59, and 121 to 126 (DVGKST).

It belongs to the Clp1 family. Clp1 subfamily.

Its subcellular location is the nucleus. Its function is as follows. Required for endonucleolytic cleavage during polyadenylation-dependent pre-mRNA 3'-end formation. The protein is Protein CLP1 homolog (cbc) of Drosophila persimilis (Fruit fly).